Here is a 309-residue protein sequence, read N- to C-terminus: Sulfate adenylyltransferase subunit 2 (309 aa).

This sequence belongs to the PAPS reductase family. CysD subfamily. Heterodimer composed of CysD, the smaller subunit, and CysN.

The enzyme catalyses sulfate + ATP + H(+) = adenosine 5'-phosphosulfate + diphosphate. Its pathway is sulfur metabolism; hydrogen sulfide biosynthesis; sulfite from sulfate: step 1/3. Its function is as follows. With CysN forms the ATP sulfurylase (ATPS) that catalyzes the adenylation of sulfate producing adenosine 5'-phosphosulfate (APS) and diphosphate, the first enzymatic step in sulfur assimilation pathway. APS synthesis involves the formation of a high-energy phosphoric-sulfuric acid anhydride bond driven by GTP hydrolysis by CysN coupled to ATP hydrolysis by CysD. This Mycobacterium sp. (strain KMS) protein is Sulfate adenylyltransferase subunit 2.